The following is a 97-amino-acid chain: UPF0729 protein AAEL015238 (97 aa).

The segment at 69-97 (EVAASGSGSNGTATAVGSEGEAEETKKSQ) is disordered. Residues 74-83 (GSGSNGTATA) are compositionally biased toward polar residues.

This sequence belongs to the UPF0729 family.

The protein is UPF0729 protein AAEL015238 of Aedes aegypti (Yellowfever mosquito).